Consider the following 254-residue polypeptide: E3 ubiquitin-protein ligase NEURL3 (254 aa).

The NHR domain maps to Ala-17–Pro-174. The RING-type zinc-finger motif lies at Cys-197 to Arg-236.

In terms of tissue distribution, expressed in alveolar epithelial type II cells.

The protein resides in the cytoplasm. The enzyme catalyses S-ubiquitinyl-[E2 ubiquitin-conjugating enzyme]-L-cysteine + [acceptor protein]-L-lysine = [E2 ubiquitin-conjugating enzyme]-L-cysteine + N(6)-ubiquitinyl-[acceptor protein]-L-lysine.. The protein operates within protein modification; protein ubiquitination. In terms of biological role, E3 ubiquitin-protein ligase that plays a role in various biological processes such as lung development or innate immunity. Seems to utilize UBE2E1. Promotes innate antiviral response by catalyzing 'Lys-63'-linked ubiquitination of IRF7. Plays an essential role in TLR4-mediated activation of MAPK pathways by promoting 'Lys-48'-linked polyubiquitination of the phosphatase DUSP1/MKP1. The sequence is that of E3 ubiquitin-protein ligase NEURL3 (Neurl3) from Mus musculus (Mouse).